A 118-amino-acid polypeptide reads, in one-letter code: Large ribosomal subunit protein bL19 (118 aa).

Belongs to the bacterial ribosomal protein bL19 family.

Its function is as follows. This protein is located at the 30S-50S ribosomal subunit interface and may play a role in the structure and function of the aminoacyl-tRNA binding site. The protein is Large ribosomal subunit protein bL19 of Geobacter metallireducens (strain ATCC 53774 / DSM 7210 / GS-15).